A 147-amino-acid polypeptide reads, in one-letter code: Acireductone dioxygenase (147 aa).

Fe(2+) contacts are provided by H74, H76, E80, and H119. Residues H74, H76, E80, and H119 each contribute to the Ni(2+) site.

This sequence belongs to the acireductone dioxygenase (ARD) family. Requires Fe(2+) as cofactor. The cofactor is Ni(2+).

It localises to the cytoplasm. The protein resides in the nucleus. It catalyses the reaction 1,2-dihydroxy-5-(methylsulfanyl)pent-1-en-3-one + O2 = 4-methylsulfanyl-2-oxobutanoate + formate + 2 H(+). The enzyme catalyses 1,2-dihydroxy-5-(methylsulfanyl)pent-1-en-3-one + O2 = 3-(methylsulfanyl)propanoate + CO + formate + 2 H(+). The protein operates within amino-acid biosynthesis; L-methionine biosynthesis via salvage pathway; L-methionine from S-methyl-5-thio-alpha-D-ribose 1-phosphate: step 5/6. Catalyzes 2 different reactions between oxygen and the acireductone 1,2-dihydroxy-3-keto-5-methylthiopentene (DHK-MTPene) depending upon the metal bound in the active site. Fe-containing acireductone dioxygenase (Fe-ARD) produces formate and 2-keto-4-methylthiobutyrate (KMTB), the alpha-ketoacid precursor of methionine in the methionine recycle pathway. Ni-containing acireductone dioxygenase (Ni-ARD) produces methylthiopropionate, carbon monoxide and formate, and does not lie on the methionine recycle pathway. The chain is Acireductone dioxygenase (adi1) from Dictyostelium discoideum (Social amoeba).